Reading from the N-terminus, the 380-residue chain is Succinyl-diaminopimelate desuccinylase (380 aa).

His-68 contributes to the Zn(2+) binding site. The active site involves Asp-70. Asp-101 provides a ligand contact to Zn(2+). Residue Glu-135 is the Proton acceptor of the active site. Zn(2+) contacts are provided by Glu-136, Glu-164, and His-350.

It belongs to the peptidase M20A family. DapE subfamily. As to quaternary structure, homodimer. It depends on Zn(2+) as a cofactor. Co(2+) serves as cofactor.

It carries out the reaction N-succinyl-(2S,6S)-2,6-diaminopimelate + H2O = (2S,6S)-2,6-diaminopimelate + succinate. It participates in amino-acid biosynthesis; L-lysine biosynthesis via DAP pathway; LL-2,6-diaminopimelate from (S)-tetrahydrodipicolinate (succinylase route): step 3/3. Its function is as follows. Catalyzes the hydrolysis of N-succinyl-L,L-diaminopimelic acid (SDAP), forming succinate and LL-2,6-diaminopimelate (DAP), an intermediate involved in the bacterial biosynthesis of lysine and meso-diaminopimelic acid, an essential component of bacterial cell walls. The sequence is that of Succinyl-diaminopimelate desuccinylase from Tolumonas auensis (strain DSM 9187 / NBRC 110442 / TA 4).